Here is a 603-residue protein sequence, read N- to C-terminus: UvrABC system protein C (603 aa).

One can recognise a GIY-YIG domain in the interval 15-92 (DKPGCYLMKN…IQKHQPYFNI (78 aa)). Residues 197–232 (ATVKRQLTKKMQRAAENMEFERAAEIRDQLHYIEVT) form the UVR domain.

It belongs to the UvrC family. As to quaternary structure, interacts with UvrB in an incision complex.

It localises to the cytoplasm. The UvrABC repair system catalyzes the recognition and processing of DNA lesions. UvrC both incises the 5' and 3' sides of the lesion. The N-terminal half is responsible for the 3' incision and the C-terminal half is responsible for the 5' incision. In Limosilactobacillus reuteri (strain DSM 20016) (Lactobacillus reuteri), this protein is UvrABC system protein C.